Here is a 439-residue protein sequence, read N- to C-terminus: uncharacterized protein (439 aa).

The DAGKc domain occupies threonine 65–glycine 208.

This is an uncharacterized protein from Caenorhabditis elegans.